Here is a 223-residue protein sequence, read N- to C-terminus: UPF0173 metal-dependent hydrolase Amet_4625 (223 aa).

It belongs to the UPF0173 family.

This is UPF0173 metal-dependent hydrolase Amet_4625 from Alkaliphilus metalliredigens (strain QYMF).